Here is a 404-residue protein sequence, read N- to C-terminus: Dihydrosphingosine 1-phosphate phosphatase YSR3 (404 aa).

Residues 1-86 (MTIIQTVTEL…PFRDVYFKYT (86 aa)) are Lumenal-facing. The N-linked (GlcNAc...) asparagine glycan is linked to N62. A helical membrane pass occupies residues 87–107 (SLMGSHMFYVIVLPMPVWLGY). Topologically, residues 108 to 113 (RDLTRD) are cytoplasmic. A helical transmembrane segment spans residues 114-134 (MIYVLGYSIYLSGYLKDYWCL). Residues 129–137 (KDYWCLPRP) are phosphatase sequence motif I. The Lumenal portion of the chain corresponds to 135-154 (PRPKSPPVDRITLSEYTTKE). A helical membrane pass occupies residues 155–176 (YGAPSSHSANATAVSLLFFWRI). Residues 158 to 161 (PSSH) form a phosphatase sequence motif II region. The active-site Proton donor is H161. Residues 177–182 (CLSDTL) lie on the Cytoplasmic side of the membrane. The chain crosses the membrane as a helical span at residues 183–203 (VWPTKLLLLSLVIFYYLTLVF). The Lumenal segment spans residues 204 to 215 (GRVYCGMHGMLD). Residues 204–215 (GRVYCGMHGMLD) form a phosphatase sequence motif III region. Residue H211 is the Nucleophile of the active site. The helical transmembrane segment at 216–236 (LFSGAAVGAICFFIRIWVVHA) threads the bilayer. The Cytoplasmic segment spans residues 237 to 241 (LRNFQ). The helical transmembrane segment at 242-262 (IGEHLWFPLLSVAWGLFILFN) threads the bilayer. Over 263–319 (HVRPIDECPCFEDSVAFIGVVSGLDCSDWLTERYGWNLVCSRYASCGSKVFLRPLVG) the chain is Lumenal. The chain crosses the membrane as a helical span at residues 320 to 340 (VASVIVWKDVISKTAVYTLLI). Residues 341 to 379 (KLLRFHDDRSEKVHFHNETSEEEECLLYSGVSKVEIVGR) are Cytoplasmic-facing. A helical membrane pass occupies residues 380-400 (FLIYAGIPTTVFLLCPVFFTW). The Lumenal segment spans residues 401-404 (TNLR).

It belongs to the type 2 lipid phosphate phosphatase family.

It is found in the endoplasmic reticulum membrane. The enzyme catalyses sphinganine 1-phosphate + H2O = sphinganine + phosphate. Functionally, dihydrosphingosine 1-phosphate phosphatase required for efficient ceramide synthesis from exogenous sphingoid bases. Involved in endocytosis and calcium-mediated signaling. This chain is Dihydrosphingosine 1-phosphate phosphatase YSR3, found in Saccharomyces cerevisiae (strain ATCC 204508 / S288c) (Baker's yeast).